We begin with the raw amino-acid sequence, 423 residues long: Carboxypeptidase B2 (423 aa).

The N-terminal stretch at Met-1–Ala-22 is a signal peptide. Residues Phe-23–Arg-114 constitute a propeptide, activation peptide. 3 N-linked (GlcNAc...) asparagine glycosylation sites follow: Asn-44, Asn-73, and Asn-85. N-linked (GlcNAc...) (complex) asparagine glycosylation is present at Asn-108. A Peptidase M14 domain is found at Gln-122–Val-419. Cys-178 and Cys-191 are oxidised to a cystine. Residues His-181 and Glu-184 each coordinate Zn(2+). Substrate-binding positions include His-181 to Glu-184 and Arg-239. Residue Asn-241 is glycosylated (N-linked (GlcNAc...) asparagine; partial). Cystine bridges form between Cys-250–Cys-274 and Cys-265–Cys-279. Asn-256–Arg-257 serves as a coordination point for substrate. His-310 lines the Zn(2+) pocket. Residues Ser-311 to Tyr-312 and Tyr-363 contribute to the substrate site. Residue Glu-385 is the Proton donor/acceptor of the active site.

The protein belongs to the peptidase M14 family. It depends on Zn(2+) as a cofactor. In terms of processing, N-glycosylated. N-glycan at Asn-108: Hex5HexNAc4. In terms of tissue distribution, plasma; synthesized in the liver.

The protein localises to the secreted. The catalysed reaction is Release of C-terminal Arg and Lys from a polypeptide.. TAFI/CPB2 is unique among carboxypeptidases in that it spontaneously inactivates with a short half-life, a property that is crucial for its role in controlling blood clot lysis. The zymogen is stabilized by interactions with the activation peptide. Release of the activation peptide increases a dynamic flap mobility and in time this leads to conformational changes that disrupt the catalytic site and expose a cryptic thrombin-cleavage site present at Arg-324. Functionally, cleaves C-terminal arginine or lysine residues from biologically active peptides such as kinins or anaphylatoxins in the circulation thereby regulating their activities. Down-regulates fibrinolysis by removing C-terminal lysine residues from fibrin that has already been partially degraded by plasmin. The sequence is that of Carboxypeptidase B2 (CPB2) from Homo sapiens (Human).